The sequence spans 291 residues: uncharacterized protein (291 aa).

This sequence to E.cuniculi ECU03_0120.

This is an uncharacterized protein from Encephalitozoon cuniculi (strain GB-M1) (Microsporidian parasite).